Consider the following 362-residue polypeptide: Bifunctional chorismate mutase/prephenate dehydratase (362 aa).

Positions 3–91 constitute a Chorismate mutase domain; it reads QTIDELLIPH…ECLAVERPLT (89 aa). Positions 13, 30, 41, and 52 each coordinate substrate. In terms of domain architecture, Prephenate dehydratase spans 92 to 269; that stretch reads IAYLGPQGTF…NTTRFLVMGH (178 aa). In terms of domain architecture, ACT spans 281–356; that stretch reads SLAVSAPNRA…RASFVKAIGS (76 aa).

The protein localises to the cytoplasm. It carries out the reaction chorismate = prephenate. It catalyses the reaction prephenate + H(+) = 3-phenylpyruvate + CO2 + H2O. It functions in the pathway amino-acid biosynthesis; L-phenylalanine biosynthesis; phenylpyruvate from prephenate: step 1/1. It participates in metabolic intermediate biosynthesis; prephenate biosynthesis; prephenate from chorismate: step 1/1. In terms of biological role, catalyzes the Claisen rearrangement of chorismate to prephenate and the decarboxylation/dehydration of prephenate to phenylpyruvate. The protein is Bifunctional chorismate mutase/prephenate dehydratase (pheA) of Neisseria gonorrhoeae (strain ATCC 700825 / FA 1090).